Reading from the N-terminus, the 85-residue chain is Large ribosomal subunit protein bL27 (85 aa).

Residues 1–20 (MATKKAGGSTRNGRDSEAKR) are disordered.

Belongs to the bacterial ribosomal protein bL27 family.

The chain is Large ribosomal subunit protein bL27 from Histophilus somni (strain 129Pt) (Haemophilus somnus).